We begin with the raw amino-acid sequence, 305 residues long: Aurasperone B biosynthesis cluster protein A (305 aa).

The signal sequence occupies residues 1–26 (MSIFFSIRFWPAAISAAILWLPQVLG). Asn-29, Asn-34, Asn-64, Asn-83, Asn-132, Asn-183, Asn-218, and Asn-288 each carry an N-linked (GlcNAc...) asparagine glycan.

The protein belongs to the bfoA family.

In terms of biological role, part of the gene cluster that mediates the biosynthesis of aurasperone B, a dimeric gamma-naphthopyrone. The first step in the biosynthesis of aurasperone B is the production of gamma-naphthopyrone precursor YWA1 by the non-reducing polyketide synthase albA, via condensation of one acetyl-CoA starter unit with 6 malonyl-CoA units. YWA1 is then methylated by aunE at position C-6 to yield foncesin which is further methylated at position C-8 by aunD to produce fonsecin B. A key enzyme in the biosynthetic pathway is the cytochrome P450 monooxygenase aunB which catalyzes the oxidative dimerization of fonsecin B to aurasperone B. AunB also catalyzes the oxidative dimerization of rubrofusarin B into aurasperone A. The chain is Aurasperone B biosynthesis cluster protein A from Aspergillus niger (strain ATCC 1015 / CBS 113.46 / FGSC A1144 / LSHB Ac4 / NCTC 3858a / NRRL 328 / USDA 3528.7).